Reading from the N-terminus, the 306-residue chain is Protein-methionine-sulfoxide reductase catalytic subunit MsrP (306 aa).

A signal peptide (tat-type signal) is located at residues 1–44 (MLIRHAPDLTDNDVTGHGLYLRRRDFIGGAAGLGLMAAAGSASA). Mo-molybdopterin is bound by residues asparagine 69, 72-73 (YE), cysteine 127, threonine 162, asparagine 210, arginine 215, and 226-228 (GIK).

It belongs to the MsrP family. Heterodimer of a catalytic subunit (MsrP) and a heme-binding subunit (MsrQ). Mo-molybdopterin is required as a cofactor. Post-translationally, predicted to be exported by the Tat system. The position of the signal peptide cleavage has not been experimentally proven.

The protein resides in the periplasm. It catalyses the reaction L-methionyl-[protein] + a quinone + H2O = L-methionyl-(S)-S-oxide-[protein] + a quinol. The catalysed reaction is L-methionyl-[protein] + a quinone + H2O = L-methionyl-(R)-S-oxide-[protein] + a quinol. Part of the MsrPQ system that repairs oxidized periplasmic proteins containing methionine sulfoxide residues (Met-O), using respiratory chain electrons. Thus protects these proteins from oxidative-stress damage caused by reactive species of oxygen and chlorine generated by the host defense mechanisms. MsrPQ is essential for the maintenance of envelope integrity under bleach stress, rescuing a wide series of structurally unrelated periplasmic proteins from methionine oxidation. The catalytic subunit MsrP is non-stereospecific, being able to reduce both (R-) and (S-) diastereoisomers of methionine sulfoxide. The chain is Protein-methionine-sulfoxide reductase catalytic subunit MsrP from Caulobacter sp. (strain K31).